The chain runs to 550 residues: Envelope glycoprotein E (550 aa).

Positions 1 to 20 are cleaved as a signal peptide; that stretch reads MDRGAVVGFLLGVCVVSCLA. Residues 21 to 419 lie on the Virion surface side of the membrane; that stretch reads GTPKTSWRRV…HAPPTHGALR (399 aa). The segment at 63-88 is interaction with gI; the sequence is CGPLHPSWVSLMPPKQVPETVVDAAC. Asn-124 carries an N-linked (GlcNAc...) asparagine; by host glycan. Residues 162–214 form a disordered region; it reads QPAPVPTPPPTPADYDEDDNDEGEDESLAGTPASGTPRLPPPPAPPRSWPSAP. A compositionally biased stretch (pro residues) spans 164 to 173; it reads APVPTPPPTP. Over residues 175-188 the composition is skewed to acidic residues; sequence DYDEDDNDEGEDES. Tyr-176 is subject to Sulfotyrosine; by host. Pro residues predominate over residues 199-209; the sequence is RLPPPPAPPRS. The tract at residues 235–380 is fc-binding; sequence SPGETFSTNV…GHITISTAAQ (146 aa). The N-linked (GlcNAc...) asparagine; by host glycan is linked to Asn-243. 3 disulfide bridges follow: Cys-271-Cys-297, Cys-280-Cys-289, and Cys-314-Cys-323. Positions 394 to 413 are disordered; sequence GADLAEPTHPHVGAPPHAPP. A compositionally biased stretch (low complexity) spans 403–413; sequence PHVGAPPHAPP. A helical transmembrane segment spans residues 420–440; sequence LGAVMGAALLLSALGLSVWAC. Residues 441 to 550 lie on the Intravirion side of the membrane; sequence MTCWRRRAWR…SQASDSSVFW (110 aa). 2 consecutive short sequence motifs (internalization motif) follow at residues 463–466 and 472–475; these read YIRV and YADW. An interaction with VP22 and UL11 region spans residues 470-495; that stretch reads ELYADWSSDSEGERDQVPWLAPPERP. 2 positions are modified to phosphoserine; by host CK2: Ser-476 and Ser-477. The tract at residues 476–484 is acidic; it reads SSDSEGERD. The interval 476 to 550 is disordered; that stretch reads SSDSEGERDQ…SQASDSSVFW (75 aa). Residue Ser-503 is modified to Phosphoserine. The segment covering 541 to 550 has biased composition (polar residues); that stretch reads SQASDSSVFW.

It belongs to the alphaherpesvirinae glycoprotein E family. As to quaternary structure, interacts with gI; this interaction enhances the Fc receptor function of gE. The heterodimer gE/gI interacts with the Fc part of host IgG. Interacts (via C-terminus) with VP22 tegument protein; this interaction is necessary for the recruitment of VP22 to the Golgi and its packaging into virions. Interacts (via C-terminus) with UL11 tegument protein. Post-translationally, phosphorylated on serines within the acidic cluster. Phosphorylation determines whether endocytosed viral gE traffics to the trans-Golgi network or recycles to the cell membrane. N-glycosylated, and sulfated.

The protein localises to the virion membrane. It is found in the host cell membrane. Its subcellular location is the host cell junction. The protein resides in the host Golgi apparatus membrane. It localises to the host endosome membrane. Its function is as follows. In epithelial cells, the heterodimer gE/gI is required for the cell-to-cell spread of the virus, by sorting nascent virions to cell junctions. Once the virus reaches the cell junctions, virus particles can spread to adjacent cells extremely rapidly through interactions with cellular receptors that accumulate at these junctions. Implicated in basolateral spread in polarized cells. In neuronal cells, gE/gI is essential for the anterograde spread of the infection throughout the host nervous system. Together with US9, the heterodimer gE/gI is involved in the sorting and transport of viral structural components toward axon tips. In terms of biological role, the heterodimer gE/gI serves as a receptor for the Fc part of host IgG. Dissociation of gE/gI from IgG occurs at acidic pH. May thus be involved in anti-HSV antibodies bipolar bridging, followed by intracellular endocytosis and degradation, thereby interfering with host IgG-mediated immune responses. This is Envelope glycoprotein E (gE) from Human herpesvirus 1 (strain 17) (HHV-1).